The chain runs to 415 residues: Multidrug resistance protein MdtA (415 aa).

The N-terminal stretch at 1–21 (MKGSYKSRWVIVIVVVIAAIA) is a signal peptide. Disordered regions lie at residues 32-59 (SRSA…SGPL) and 392-415 (EAQS…GARS). The span at 399-415 (SEEKATSREYAKKGARS) shows a compositional bias: basic and acidic residues.

Belongs to the membrane fusion protein (MFP) (TC 8.A.1) family. Part of a tripartite efflux system composed of MdtA, MdtB and MdtC.

The protein localises to the cell inner membrane. Functionally, the MdtABC tripartite complex confers resistance against novobiocin and deoxycholate. In Escherichia coli O17:K52:H18 (strain UMN026 / ExPEC), this protein is Multidrug resistance protein MdtA.